The chain runs to 396 residues: MALKLNPVTTFPSTRSLNNFSSRSPRTFLMAASTFSSTSTKEAEAKEVTWTTKRGAYASDPFHAPTGSWEIFKSLGRLGLRDVLISHLKPVEKCWQPQDFLPEPESDGFEEQVKELRARAKELPDDYFVVLVGDMITEEALPTYQTMLNTLDGVRDETGASLTPWAIWTRAWTAEENRHGDLLNKYLYLSGRVDMRQIEKTIQYLIGSGMDPKTENNPYLGFIYTSFQERATFISHGNTARLAKDHGDMKLAQICGIIAADEKRHETAYTKIVEKLFEIDPDGTVLALADMMRKKISMPAHLMYDGEDDNLFDNYSSVAQRIGDTAKDYADILEFLVGRWKVDAFTGLSGEGNKAQDFVCGLPARIRKLEERAAGRAKQTSKSVPFSWIFSRELVL.

The N-terminal 32 residues, 1 to 32 (MALKLNPVTTFPSTRSLNNFSSRSPRTFLMAA), are a transit peptide targeting the chloroplast. The Fe cation site is built by Glu138, Glu176, His179, Glu229, Glu262, and His265.

This sequence belongs to the fatty acid desaturase type 2 family. As to quaternary structure, homodimer. It depends on Fe(2+) as a cofactor.

It is found in the plastid. It localises to the chloroplast. It carries out the reaction octadecanoyl-[ACP] + 2 reduced [2Fe-2S]-[ferredoxin] + O2 + 2 H(+) = (9Z)-octadecenoyl-[ACP] + 2 oxidized [2Fe-2S]-[ferredoxin] + 2 H2O. It participates in lipid metabolism; fatty acid metabolism. Converts stearoyl-ACP to oleoyl-ACP by introduction of a cis double bond between carbons 9 and 10 of the acyl chain. The polypeptide is Stearoyl-[acyl-carrier-protein] 9-desaturase, chloroplastic (Linum usitatissimum (Flax)).